Consider the following 329-residue polypeptide: G-protein coupled bile acid receptor 1 (329 aa).

Over 1-18 (MMSHNTTELSAIPRGVQE) the chain is Extracellular. The N-linked (GlcNAc...) asparagine glycan is linked to Asn-5. A helical membrane pass occupies residues 19-39 (LSLVLASLIVIANLLLALGIV). The Cytoplasmic portion of the chain corresponds to 40–49 (LDRHLRSPPA). The chain crosses the membrane as a helical span at residues 50 to 70 (GCFFLSLLLAGLLTGLALPTL). The Extracellular portion of the chain corresponds to 71–84 (PGLWNRSHQGYWSC). Asn-75 is a glycosylation site (N-linked (GlcNAc...) asparagine). Cys-84 and Cys-154 are oxidised to a cystine. Residues 85 to 105 (LLLHLAPNFCFLSLLANLLLV) form a helical membrane-spanning segment. At 106–124 (HGERYMAVLQPLRPHGSVR) the chain is on the cytoplasmic side. The chain crosses the membrane as a helical span at residues 125-145 (LALFLTWISSLLFASLPALGW). At 146–157 (NHWSPGANCSSQ) the chain is on the extracellular side. N-linked (GlcNAc...) asparagine glycosylation is present at Asn-153. A helical transmembrane segment spans residues 158-178 (AIFPAPYLYLEVYGLLLPAVG). Over 179–229 (ATALLSVRVLATAHHQLREIRRLERAVCRDAPSTLARALTWRQARAQAGAT) the chain is Cytoplasmic. Residues 230–250 (LLFLLCWGPYVATLLLSVLAY) form a helical membrane-spanning segment. Residues 251–260 (ERRPPLGPVT) lie on the Extracellular side of the membrane. A helical transmembrane segment spans residues 261 to 281 (LLSLISLGSASAAVVPVAMGL). Over 282–329 (GDQRYTAPWRTAAQRWLQVLRGRPKRANPGPSTAYHSSSQCSTDLDLN) the chain is Cytoplasmic. Residues 306–329 (KRANPGPSTAYHSSSQCSTDLDLN) are disordered. Residues 311–329 (GPSTAYHSSSQCSTDLDLN) are compositionally biased toward polar residues.

It belongs to the G-protein coupled receptor 1 family.

It localises to the cell membrane. Functionally, receptor for bile acid. Bile acid-binding induces its internalization, activation of extracellular signal-regulated kinase and intracellular cAMP production. May be involved in the suppression of macrophage functions by bile acids. Involved in bile acid promoted GLP1R secretion. The sequence is that of G-protein coupled bile acid receptor 1 (Gpbar1) from Rattus norvegicus (Rat).